The primary structure comprises 194 residues: Amidophosphoribosyltransferase (194 aa).

The propeptide occupies 1–11 (MPHEPKGLNEE). The active-site Nucleophile is the Cys12. Positions 12–194 (CGVFGVWGNP…PHGFRPMVVG (183 aa)) constitute a Glutamine amidotransferase type-2 domain.

This sequence in the C-terminal section; belongs to the purine/pyrimidine phosphoribosyltransferase family.

The catalysed reaction is 5-phospho-beta-D-ribosylamine + L-glutamate + diphosphate = 5-phospho-alpha-D-ribose 1-diphosphate + L-glutamine + H2O. It functions in the pathway purine metabolism; IMP biosynthesis via de novo pathway; N(1)-(5-phospho-D-ribosyl)glycinamide from 5-phospho-alpha-D-ribose 1-diphosphate: step 1/2. Functionally, catalyzes the formation of phosphoribosylamine from phosphoribosylpyrophosphate (PRPP) and glutamine. In Lacticaseibacillus casei (Lactobacillus casei), this protein is Amidophosphoribosyltransferase.